The primary structure comprises 312 residues: Cytochrome f (312 aa).

Positions 1-30 (MYLSKNFFLNLKTFIFSFFVLCFFSQSAQA) are cleaved as a signal peptide. The heme site is built by Tyr-31, Cys-51, Cys-54, and His-55. The helical transmembrane segment at 278–298 (VQGLLLFSLFILLAQIFLVLK) threads the bilayer.

This sequence belongs to the cytochrome f family. The 4 large subunits of the cytochrome b6-f complex are cytochrome b6, subunit IV (17 kDa polypeptide, petD), cytochrome f and the Rieske protein, while the 4 small subunits are PetG, PetL, PetM and PetN. The complex functions as a dimer. Heme serves as cofactor.

Its subcellular location is the plastid. The protein localises to the chloroplast thylakoid membrane. Functionally, component of the cytochrome b6-f complex, which mediates electron transfer between photosystem II (PSII) and photosystem I (PSI), cyclic electron flow around PSI, and state transitions. The polypeptide is Cytochrome f (petA) (Bigelowiella natans (Pedinomonas minutissima)).